We begin with the raw amino-acid sequence, 2599 residues long: MVTTTRATNPTNTLLLFGPQALSFSTATFADIHARVVQTSENAWIKQTITSLPGLWDALVKEFPQYGALEGKQLLRDLDRWFETGTMEHAEPHLPNILLSPMVVITQLTEYVDYLKTMPHAADQQTETVGFCTGLLTALAASLAPDIKGIRQYGAIAIKLAMIIGGVVDVQDITSPNGPSKSLAVAWDSAETQDRLNQIIDQSPEAYISVEYDHNRATITTAARSISSLQQRLRNAGLIASQIGLRGRFHCACYEKDIEALSKFCDSVPSLCLPDAAVLALPTRSNDAGSFILSGKLHHCALRSILLDTSHWYQTLEVVRQSFLKSPSSMVVSFGPERCIPPSILKGLSSIVTTAAEYQPSYLHRDPELCNPNEIAVIGMSCKVAGADDVDEFWDLLCKAESQHQEVPKERFGFESAFREVDPTRKWYGNFINEHDCFDHKFFKKSAREIAATDPQQRQMLQVAYQAVEQSGYFTTPKSDKDRKIGCYIGVCAADYEYNVACHPPNAFMATGNLKSFVAGKISHWFGWTGPGLCIDTACSSSLVAVHQACQAILTGDCTAALAGGANIITHPLWYQNLAAASFLSPTGQCKPFDASADGYCRGEGFAAVFLKKMSAAIADGDMIIGSIKATAVNQNQNCTPVFVPNAPTLSDLFRDVLDRSQLTANQITVVEAHGTGTQVGDPAEYESIRNVLGGPSRSTPLLFGSVKGLVGHTECTSGAVSLVKTLLMQQHEAIPPQPSFDRLNPEIPVSESDNMQIATRFSPWTAEYRAALINNYGACGSNASMVVAQAPRTEQKRSATRRTSVVLDYPFRLCGSDDRALRAYSERLVRFIASGIKDGISVADLAFNVCRQSNPTLDRSLAFACRTTQEVEEKLRAFVAGNQGLISASRSKTPREVILCFGGQISNYVGLDREVYDNVALLRKHLAICDAACRDLGVDSIFPGIFQKSPISDPVKLQTILFSTQYSSAKAWMDSGVRPVAAVGHSFGELTALCVTGILSLADAMKMIVGRATVIRDFWGEDKGSMIAVEADENRVQRLLAEAAKQCELIHVRAPTIACVNGPTSYTLAGPVKSIDIVTEVISRLSDSGPSIRSKRLKVTNAFHSTLVEPLMEELEKVGQQLTFNAPTIQLERAIEHHSDATLTSDYVPDHMRNPVYFNQAVQRLAQQYPDSVWLEAGSNSTITSMASRALGSPKSLHFQAVNITSDDSWSMLITSTLSLWKQGISTNFWAYHAKQTYEYNPVLLPPYQFEPSRHWMELKVPSFMSNGNVQCGPRDEEEPPKTLWSLIEASDKVARFQINTAAPKYVELVSGHVIANTAPICPATVEVDIVVEALRSLRPDFMDSNLQPQVLAVTNQSPICIDPNRSVWLECQAMDSNLVWEWRIVSDSLQEPGTSSSAHVLGKLAFLSGQDEVKQQESEFMRLERLIGHQRCVDLLNTTEADDIIQGRNIYTTFAGVVDYGEQYRGLKKIVGKGLESAGRVQKKPSEESWLDAHLGDCFSQVGGIWVNCMTDHNPDEMFIATGFEKWVRSPALRHGQPRPEIWDVLACHHRSSEQTYLTDIFIFDAEQGALTEVILGINYHKVAKASMSKILSRLSGTEAAPSSSTRAHPTSSSSPRLPGPFVPEDKSQNETQTAGTNAVAKKKSEKSAQQNVLDKTRALLAEISGLEPSEIEAETGLADIGIDSLMGMELARDLEALFKCPLLGDELANVTTFQGLVEYVQSAVGVPANGDEPDNTNADEVFEEDNLAASPSSSSSSTNLTEDSSLDPTETTTNISSYPELSPAWVLEAFEESKQLTDHFIEQYRCANYVDTILPKQTQLCVALTVEAFEKLGCPIRSAVAGQKLERILHIPKHAQLAQYLYRLLSADARLINLTEDGRITRTHMALPKPSDQILQDLLRLYPDHEWANRLAAFTGARLAEVLKGETDGLGLIFGTDEGRELVAGLYGDSLLNKLSYRQMEDIITRLASRIPRDSGPLKILEMGAGTGGTTRGMAPLLARLGIPVEYTFTDLSGSFVAAARKKYQKEYPFMKFQVHDIEKPPSDQLRHSQHIVIASNAIHATHSLTDSSRHVREFLKTDGFLMIVEMTQPVHWVDIIFGLFDGWWLFADGRDHAIASAGWWEKVFQSVGYGQVDWTDGHRPEVQIQRVIIALASGPRYGRQPLPPAPPPNLVPGSHASRQAAVNEYLDKYTKGFTLPAQTSNTDISNSTSYWEKQCVLITGATGSLGVHLVAAVAALDDVQTVICLNRRSPMDPDLRQQQAFERRGILLEAASMSKIRVLQTDSSKPQLGLTDEVYSSLVTSTTHIIHNAWPMTGKRPLSGLEQQFLVMRNLLDLAAQCSSTRPANAPRIVFQFISSIATVGYYPLWSGQTLVPEARMGIESVLANGYGEAKYVCEQMLDRTLHQYPDRFRAMAVRLGQIAGSRTSGYWNPMEHLSFLFKSAQTLQVFPDFTGDLCWTPVNDVAATLSDLLLRSTHSNSTTDQPIYHIDNPVRQSWSEMVPVLIDALGIPAQNVIPFADWVCRVRAFPGQVEWDNPSALLIDFLDDHFLRMSCGGLLLDTKRACEHSPTLAAVGPVTAELARKYIQSWKEMGFLNP.

An N-terminal acylcarrier protein transacylase domain (SAT) region spans residues 95–231; sequence PNILLSPMVV…AARSISSLQQ (137 aa). Catalysis depends on Cys132, which acts as the Nucleophile; for transacylase activity. His250 acts as the Proton donor/acceptor; for transacylase activity in catalysis. Residues 372–790 form the Ketosynthase family 3 (KS3) domain; sequence PNEIAVIGMS…GSNASMVVAQ (419 aa). Active-site for beta-ketoacyl synthase activity residues include Cys539, His674, and His713. Positions 902–1193 are malonyl-CoA:ACP transacylase (MAT) domain; that stretch reads FGGQISNYVG…ITSMASRALG (292 aa). The N-terminal hotdog fold stretch occupies residues 1282 to 1413; the sequence is PKTLWSLIEA…GKLAFLSGQD (132 aa). In terms of domain architecture, PKS/mFAS DH spans 1282-1591; the sequence is PKTLWSLIEA…YHKVAKASMS (310 aa). The interval 1310-1589 is product template (PT) domain; that stretch reads LVSGHVIANT…INYHKVAKAS (280 aa). The active-site Proton acceptor; for dehydratase activity is the His1314. Residues 1443–1591 form a C-terminal hotdog fold region; that stretch reads ADDIIQGRNI…YHKVAKASMS (149 aa). Residue Asp1499 is the Proton donor; for dehydratase activity of the active site. The segment at 1601–1652 is disordered; the sequence is EAAPSSSTRAHPTSSSSPRLPGPFVPEDKSQNETQTAGTNAVAKKKSEKSAQ. Positions 1602-1619 are enriched in low complexity; that stretch reads AAPSSSTRAHPTSSSSPR. Positions 1653-1727 constitute a Carrier domain; the sequence is QNVLDKTRAL…GLVEYVQSAV (75 aa). At Ser1687 the chain carries O-(pantetheine 4'-phosphoryl)serine. Positions 1749 to 1779 are disordered; the sequence is NLAASPSSSSSSTNLTEDSSLDPTETTTNIS. Residues 1750–1766 show a composition bias toward low complexity; it reads LAASPSSSSSSTNLTED. A compositionally biased stretch (polar residues) spans 1769 to 1779; that stretch reads LDPTETTTNIS. Residues 1952–2140 are methyltransferase domain; the sequence is DSLLNKLSYR…VGYGQVDWTD (189 aa). Residues 2222–2467 are NADPH-binding (R) domain; that stretch reads ITGATGSLGV…LCWTPVNDVA (246 aa).

Requires pantetheine 4'-phosphate as cofactor.

It participates in secondary metabolite biosynthesis. Functionally, non-reducing polyketide synthase; part of the gene cluster that mediates the biosynthesis of azaphilones, a class of fungal metabolites characterized by a highly oxygenated pyrano-quinone bicyclic core and exhibiting a broad range of bioactivities. In the first step, the non-reducing polyketide synthase azaA forms the hexaketide precursor from successive condensations of five malonyl-CoA units, presumably with a simple acetyl-CoA starter unit. The reactive polyketide chain then undergoes a PT-mediated C2-C7 cyclization to afford the aromatic ring and is eventually released as an aldehyde through the R-domain. The putative ketoreductase azaE is proposed to catalyze the reduction of the terminal ketone resulting in the early culture product FK17-P2a. The monooxygenase azaH was demonstrated to be the only enzyme required to convert FK17-P2a to azanigerone E. AzaH first hydroxylates the benzaldehyde intermediate FK17-P2a at C4, which triggers the formation of the pyran-ring to afford azanigerone E. In parallel, the 2,4-dimethylhexanoyl chain is synthesized by the HR-PKS azaB and is proposed to be transferred to the C4-hydroxyl of azanigerone E by the acyltransferase azaD directly from the ACP domain of azaB. Alternatively, the 2,4-dimethyl-hexanoyl chain may be offloaded from the HR-PKS as a carboxylic acid and converted to an acyl-CoA by azaF. The resulting acyl-CoA molecule could then be taken up as a substrate by AzaD to form azanigerone B. To yield the carboxylic acid substituent in azanigerone A, the hydroxypropyl side chain of azanigerone B would need to undergo a C-C oxidative cleavage catalyzed by cytochrome P450 AzaI. AzaI is proposed to act on a vicinal diol that leads to a C-C bond scission either through an alkoxyradical intermediate or a peroxy complex. In the biosynthesis of azanigerone A, azanigerone B first undergoes hydroxylation at C10, possibly catalyzed by one of the two FAD-dependent monooxygenases encoded in the cluster, azaG or azaL, resulting in the vicinal diol azanigerone C. Oxidative cleavage of azanigerone C by azaI would yield the corresponding aldehyde derivative of azanigerone A. Finally, the dehydrogenase azaJ is proposed to convert the aldehyde functional group into the carboxylic acid, completing the conversion from azanigerone B to azanigerone A. Alternatively, the oxidation of aldehyde to carboxylic acid may be catalyzed by the same P450 enzyme azaI via consecutive oxidation or by endogenous alcohol dehydrogenase. This chain is Non-reducing polyketide synthase azaA, found in Aspergillus niger (strain ATCC 1015 / CBS 113.46 / FGSC A1144 / LSHB Ac4 / NCTC 3858a / NRRL 328 / USDA 3528.7).